Reading from the N-terminus, the 354-residue chain is Trans-L-3-hydroxyproline dehydratase (354 aa).

Cys104 acts as the Proton acceptor in catalysis. Residues 105 to 106 (GH), Asp269, and 274 to 275 (GS) contribute to the substrate site.

The protein belongs to the proline racemase family. In terms of assembly, homodimer.

It carries out the reaction trans-3-hydroxy-L-proline = 1-pyrroline-2-carboxylate + H2O. Its function is as follows. Catalyzes the dehydration of trans-3-hydroxy-L-proline to Delta(1)-pyrroline-2-carboxylate (Pyr2C). The protein is Trans-L-3-hydroxyproline dehydratase (L3HYPDH) of Bos taurus (Bovine).